The sequence spans 144 residues: MAKKKIEAIIKLQVAAGKANPSPPIGPALGQHGVNIMGFCKEFNAKTQGMEPGMPIPVEISVYSDRSFTFEMKTPPASYLIKKAINVKSGSSKPSKEFIGTITRAQLEEIAKVKDPDLTAADLDAAVRIIAGSARSMGVKVEGV.

Belongs to the universal ribosomal protein uL11 family. In terms of assembly, part of the ribosomal stalk of the 50S ribosomal subunit. Interacts with L10 and the large rRNA to form the base of the stalk. L10 forms an elongated spine to which L12 dimers bind in a sequential fashion forming a multimeric L10(L12)X complex. Post-translationally, one or more lysine residues are methylated.

Forms part of the ribosomal stalk which helps the ribosome interact with GTP-bound translation factors. The sequence is that of Large ribosomal subunit protein uL11 from Francisella tularensis subsp. holarctica (strain OSU18).